Consider the following 87-residue polypeptide: Long neurotoxin LlLong (87 aa).

The signal sequence occupies residues 1–20 (KTLLLTLVVVTIICLDFGYT). Intrachain disulfides connect Cys23/Cys41, Cys34/Cys62, Cys47/Cys51, Cys66/Cys77, and Cys78/Cys83.

The protein belongs to the three-finger toxin family. Long-chain subfamily. Type II alpha-neurotoxin sub-subfamily. In terms of tissue distribution, expressed by the venom gland.

The protein resides in the secreted. Functionally, binds with high affinity to muscular (alpha-1/CHRNA1) and neuronal (alpha-7/CHRNA7) nicotinic acetylcholine receptor (nAChR) and inhibits acetylcholine from binding to the receptor, thereby impairing neuromuscular and neuronal transmission. The chain is Long neurotoxin LlLong from Laticauda laticaudata (Blue-ringed sea krait).